A 257-amino-acid polypeptide reads, in one-letter code: MAADIDLQGDRESELMHALATVRSRLAAASQAAGRNVGEIELLPISKFFPATDVAILSRLGCRSVGESRAQEASTKAAEFAELLGVSREEKSSIHWHMVGQIQRNKVRSLAQWAHTAHSIDSLQLVAALDRAVAAALAGGRREQPLQVYVQISLDGDISRGGVNVTAPGAVDRVCAQVEESKSLELVGLMGIPPLGWNPDQAFEQLRLEHRRVLRSHPDAIGLSAGMSNDFEIAVKHGSTCVRVGTALLGPSRLRSP.

Lys47 carries the N6-(pyridoxal phosphate)lysine modification.

This sequence belongs to the pyridoxal phosphate-binding protein YggS/PROSC family.

In terms of biological role, pyridoxal 5'-phosphate (PLP)-binding protein, which is involved in PLP homeostasis. The protein is Pyridoxal phosphate homeostasis protein of Mycobacterium leprae (strain TN).